The following is a 620-amino-acid chain: 1-deoxy-D-xylulose-5-phosphate synthase (620 aa).

Thiamine diphosphate-binding positions include H80 and 121–123 (GHS). D152 lines the Mg(2+) pocket. Thiamine diphosphate-binding positions include 153 to 154 (GA), N181, Y288, and E370. N181 contacts Mg(2+).

It belongs to the transketolase family. DXPS subfamily. Homodimer. Mg(2+) serves as cofactor. It depends on thiamine diphosphate as a cofactor.

It catalyses the reaction D-glyceraldehyde 3-phosphate + pyruvate + H(+) = 1-deoxy-D-xylulose 5-phosphate + CO2. It participates in metabolic intermediate biosynthesis; 1-deoxy-D-xylulose 5-phosphate biosynthesis; 1-deoxy-D-xylulose 5-phosphate from D-glyceraldehyde 3-phosphate and pyruvate: step 1/1. In terms of biological role, catalyzes the acyloin condensation reaction between C atoms 2 and 3 of pyruvate and glyceraldehyde 3-phosphate to yield 1-deoxy-D-xylulose-5-phosphate (DXP). In Klebsiella pneumoniae subsp. pneumoniae (strain ATCC 700721 / MGH 78578), this protein is 1-deoxy-D-xylulose-5-phosphate synthase.